We begin with the raw amino-acid sequence, 210 residues long: Na(+)-translocating NADH-quinone reductase subunit D (210 aa).

6 helical membrane passes run valine 10–serine 30, leucine 42–isoleucine 62, isoleucine 72–alanine 92, valine 103–methionine 123, phenylalanine 143–phenylalanine 163, and asparagine 178–isoleucine 198.

The protein belongs to the NqrDE/RnfAE family. Composed of six subunits; NqrA, NqrB, NqrC, NqrD, NqrE and NqrF.

The protein localises to the cell inner membrane. It carries out the reaction a ubiquinone + n Na(+)(in) + NADH + H(+) = a ubiquinol + n Na(+)(out) + NAD(+). In terms of biological role, NQR complex catalyzes the reduction of ubiquinone-1 to ubiquinol by two successive reactions, coupled with the transport of Na(+) ions from the cytoplasm to the periplasm. NqrA to NqrE are probably involved in the second step, the conversion of ubisemiquinone to ubiquinol. The sequence is that of Na(+)-translocating NADH-quinone reductase subunit D from Pseudoalteromonas atlantica (strain T6c / ATCC BAA-1087).